Consider the following 307-residue polypeptide: Transaldolase (307 aa).

The active-site Schiff-base intermediate with substrate is Lys-125.

Belongs to the transaldolase family. Type 1 subfamily. In terms of assembly, homodimer.

The protein resides in the cytoplasm. The enzyme catalyses D-sedoheptulose 7-phosphate + D-glyceraldehyde 3-phosphate = D-erythrose 4-phosphate + beta-D-fructose 6-phosphate. Its pathway is carbohydrate degradation; pentose phosphate pathway; D-glyceraldehyde 3-phosphate and beta-D-fructose 6-phosphate from D-ribose 5-phosphate and D-xylulose 5-phosphate (non-oxidative stage): step 2/3. Transaldolase is important for the balance of metabolites in the pentose-phosphate pathway. The chain is Transaldolase from Pseudomonas paraeruginosa (strain DSM 24068 / PA7) (Pseudomonas aeruginosa (strain PA7)).